The primary structure comprises 692 residues: ATP-dependent RNA helicase MSS116, mitochondrial (692 aa).

The transit peptide at M1 to K37 directs the protein to the mitochondrion. The disordered stretch occupies residues S82–K113. The segment covering E89–K99 has biased composition (basic and acidic residues). Positions D130–Q158 match the Q motif motif. The 188-residue stretch at V162–Y349 folds into the Helicase ATP-binding domain. A175–T182 provides a ligand contact to ATP. A DEAD box motif is present at residues D290–D293. The Helicase C-terminal domain maps to Y384–N534. Positions N643–E692 are disordered. The span at G661–S670 shows a compositional bias: gly residues.

The protein belongs to the DEAD box helicase family. DDX18/HAS1 subfamily.

The protein localises to the mitochondrion matrix. It carries out the reaction ATP + H2O = ADP + phosphate + H(+). ATP-dependent RNA helicase required for mitochondrial splicing of group I and II introns. Also required for efficient mitochondrial translation. In Lodderomyces elongisporus (strain ATCC 11503 / CBS 2605 / JCM 1781 / NBRC 1676 / NRRL YB-4239) (Yeast), this protein is ATP-dependent RNA helicase MSS116, mitochondrial (MSS116).